The following is a 191-amino-acid chain: Protein Ves (191 aa).

It belongs to the Ves family.

The sequence is that of Protein Ves from Escherichia coli (strain SMS-3-5 / SECEC).